A 195-amino-acid chain; its full sequence is Interferon omega-1 (195 aa).

An N-terminal signal peptide occupies residues 1-23 (MAFVLSLLMALVLVSYGPGGSLG). 2 disulfide bridges follow: Cys-24–Cys-122 and Cys-52–Cys-162.

It belongs to the alpha/beta interferon family.

Its subcellular location is the secreted. The chain is Interferon omega-1 (IFNW1) from Bos taurus (Bovine).